A 159-amino-acid chain; its full sequence is Transcriptional repressor NrdR (159 aa).

Residues 1–11 (MQCPTCQNTDS) show a composition bias toward polar residues. The interval 1 to 21 (MQCPTCQNTDSRVLESRSADS) is disordered. Residues 3–34 (CPTCQNTDSRVLESRSADSGKSVRRRRECLNC) fold into a zinc finger. Residues 49 to 139 (VSVMKKDGSR…VYRKFNGVKD (91 aa)) form the ATP-cone domain.

This sequence belongs to the NrdR family. The cofactor is Zn(2+).

Its function is as follows. Negatively regulates transcription of bacterial ribonucleotide reductase nrd genes and operons by binding to NrdR-boxes. This chain is Transcriptional repressor NrdR, found in Prochlorococcus marinus (strain MIT 9215).